The following is a 194-amino-acid chain: Adenylate kinase (194 aa).

Residue 8 to 16 (GIPGVGKTT) participates in ATP binding.

The protein belongs to the archaeal adenylate kinase family.

It is found in the cytoplasm. The catalysed reaction is AMP + ATP = 2 ADP. This chain is Adenylate kinase (adkA), found in Sulfurisphaera tokodaii (strain DSM 16993 / JCM 10545 / NBRC 100140 / 7) (Sulfolobus tokodaii).